Here is a 102-residue protein sequence, read N- to C-terminus: Carboxysome shell protein CcmK3 (102 aa).

Positions 4 to 90 constitute a BMC domain; it reads AVGTIQTLGF…PQENVETVMP (87 aa).

The protein belongs to the bacterial microcompartments protein family. CcmK subfamily. Interacts stably with CcmK4, probably forms heterohexamers with a 1:2 CcmK3:CcmK4 stoichiometry. Bulky residues in the pore region probably preclude the formation of homohexamers by this subunit.

Its subcellular location is the carboxysome. A non-essential, minor shell protein of the carboxysome, a polyhedral inclusion where RuBisCO (ribulose bisphosphate carboxylase, rbcL-rbcS) is sequestered. Hexamers form sheets that form the facets of the polyhedral carboxysome. In PCC 7942 there are several CcmK paralogs with presumably functional differences. This subunit probably only makes heterohexamers with CcmK4. The CcmK3-CcmK4 heterohexmers have been suggested to cap other hexamers, perhaps to alter metabolite flux. This is Carboxysome shell protein CcmK3 from Synechococcus elongatus (strain ATCC 33912 / PCC 7942 / FACHB-805) (Anacystis nidulans R2).